A 175-amino-acid polypeptide reads, in one-letter code: Cytochrome c6, chloroplastic (175 aa).

Heme c-binding residues include cysteine 86, cysteine 89, and histidine 90. Position 98–102 (98–102 (QPGAT)) interacts with heme. Residue methionine 130 participates in heme c binding.

It belongs to the cytochrome c family. PetJ subfamily. As to quaternary structure, monomer. Interacts in vitro with LTO1. Post-translationally, binds 1 heme c group covalently per subunit.

The protein localises to the plastid. The protein resides in the chloroplast thylakoid lumen. In terms of biological role, functions as an electron carrier between membrane-bound cytochrome b6-f and photosystem I in oxygenic photosynthesis. The protein is Cytochrome c6, chloroplastic (PETJ) of Arabidopsis thaliana (Mouse-ear cress).